Here is a 580-residue protein sequence, read N- to C-terminus: Phosphatase and actin regulator 1 (580 aa).

A phosphoserine mark is found at Ser-67 and Ser-78. Thr-104 is modified (phosphothreonine). The Nuclear localization signal motif lies at 108 to 129 (RRRSKFANLGRIFKPWKWRKKK). One copy of the RPEL 1 repeat lies at 138–163 (AALERKISMRQSREELIKRGVLKEIY). 2 disordered regions span residues 331-355 (EQRVPCSTSYHSSGLHSGDGVTKAG) and 376-410 (KENVPHESDYEDSSCLYTREEEEEEEDEDDDSSLY). Residues 335–345 (PCSTSYHSSGL) show a composition bias toward polar residues. Over residues 395 to 407 (EEEEEEEDEDDDS) the composition is skewed to acidic residues. RPEL repeat units follow at residues 422-447 (DSLAIKLSNRPSKRELEEKNILPRQT), 460-484 (TKLTRRLSQRPTAEELEQRNILKPR), and 498-523 (RRLTRKLSQRPTVEELRERKILIRFS). The interval 462-494 (LTRRLSQRPTAEELEQRNILKPRNEQEEQEEKR) is disordered. At Ser-467 the chain carries Phosphoserine. Over residues 471 to 494 (TAEELEQRNILKPRNEQEEQEEKR) the composition is skewed to basic and acidic residues. Phosphoserine is present on Ser-505.

This sequence belongs to the phosphatase and actin regulator family. As to quaternary structure, interacts (via RPEL repeats) with ACTA1 and PPP1CA; ACTA1 and PPP1CA compete for the same binding site. Detected in umbilical vein endothelial cells.

The protein resides in the cytoplasm. Its subcellular location is the synapse. The protein localises to the nucleus. Functionally, binds actin monomers (G actin) and plays a role in multiple processes including the regulation of actin cytoskeleton dynamics, actin stress fibers formation, cell motility and survival, formation of tubules by endothelial cells, and regulation of PPP1CA activity. Involved in the regulation of cortical neuron migration and dendrite arborization. The chain is Phosphatase and actin regulator 1 (PHACTR1) from Homo sapiens (Human).